Consider the following 418-residue polypeptide: L-rhamnose isomerase (418 aa).

Residues His-262, Asp-294, and Asp-296 each coordinate Mn(2+).

It belongs to the rhamnose isomerase family. In terms of assembly, homotetramer. Mn(2+) serves as cofactor.

Its subcellular location is the cytoplasm. The catalysed reaction is L-rhamnopyranose = L-rhamnulose. It functions in the pathway carbohydrate degradation; L-rhamnose degradation; glycerone phosphate from L-rhamnose: step 1/3. Catalyzes the interconversion of L-rhamnose and L-rhamnulose. The sequence is that of L-rhamnose isomerase from Cronobacter sakazakii (strain ATCC BAA-894) (Enterobacter sakazakii).